The chain runs to 434 residues: Beta-glucuronosyltransferase GlcAT14B (434 aa).

The Cytoplasmic portion of the chain corresponds to 1 to 21 (MKKLKSYYMQVRNQQQSLDRK). A signal-anchor for type II membrane protein membrane pass occupies residues 22 to 42 (WILPLAIGSICSLFLLLLTNL). At 43 to 434 (ASSSGQTRLI…TENFRPRQCR (392 aa)) the chain is on the lumenal side. N-linked (GlcNAc...) asparagine glycosylation is found at asparagine 138, asparagine 187, asparagine 316, and asparagine 392.

It belongs to the glycosyltransferase 14 family.

The protein localises to the golgi apparatus membrane. In terms of biological role, beta-glucuronosyltransferase involved in the biosynthesis of type II arabinogalactan (AG). Modifies both the beta-1,6-linked galactan and beta-1,3-linked galactan present in type II AG. This Arabidopsis thaliana (Mouse-ear cress) protein is Beta-glucuronosyltransferase GlcAT14B.